Reading from the N-terminus, the 862-residue chain is Alpha,alpha-trehalose-phosphate synthase [UDP-forming] 5 (862 aa).

A Phosphoserine modification is found at Ser-5. Thr-32 carries the post-translational modification Phosphothreonine. The interval 60–546 (DRIIIVGNQL…ARSFIQDLER (487 aa)) is glycosyltransferase.

In the N-terminal section; belongs to the glycosyltransferase 20 family. The protein in the C-terminal section; belongs to the trehalose phosphatase family. In terms of assembly, binds to the phosphopeptide-binding site of GRF/14-3-3 and to MBF1c. Both Ser-5 and Thr-32 must be phosphorylated for binding to GRF/14-3-3. In terms of tissue distribution, low expression in leaves, stems, flower buds, flowers and siliques.

The catalysed reaction is D-glucose 6-phosphate + UDP-alpha-D-glucose = alpha,alpha-trehalose 6-phosphate + UDP + H(+). This Arabidopsis thaliana (Mouse-ear cress) protein is Alpha,alpha-trehalose-phosphate synthase [UDP-forming] 5 (TPS5).